A 208-amino-acid polypeptide reads, in one-letter code: Ribosomal RNA large subunit methyltransferase E (208 aa).

S-adenosyl-L-methionine contacts are provided by G63, W65, D83, D99, and D124. K164 acts as the Proton acceptor in catalysis.

This sequence belongs to the class I-like SAM-binding methyltransferase superfamily. RNA methyltransferase RlmE family.

The protein resides in the cytoplasm. The catalysed reaction is uridine(2552) in 23S rRNA + S-adenosyl-L-methionine = 2'-O-methyluridine(2552) in 23S rRNA + S-adenosyl-L-homocysteine + H(+). Its function is as follows. Specifically methylates the uridine in position 2552 of 23S rRNA at the 2'-O position of the ribose in the fully assembled 50S ribosomal subunit. The sequence is that of Ribosomal RNA large subunit methyltransferase E from Salmonella choleraesuis (strain SC-B67).